We begin with the raw amino-acid sequence, 222 residues long: UPF0128 protein PF1488 (222 aa).

It belongs to the UPF0128 family.

In Pyrococcus furiosus (strain ATCC 43587 / DSM 3638 / JCM 8422 / Vc1), this protein is UPF0128 protein PF1488.